Here is a 330-residue protein sequence, read N- to C-terminus: ADP-L-glycero-D-manno-heptose-6-epimerase (330 aa).

Residues 11-12 (FI), 32-33 (DN), Lys39, Lys54, 75-79 (EGACS), and Asn92 each bind NADP(+). Tyr139 (proton acceptor) is an active-site residue. Lys143 contributes to the NADP(+) binding site. Residue Asn168 coordinates substrate. Residues Val169 and Lys177 each contribute to the NADP(+) site. Lys177 serves as the catalytic Proton acceptor. Residues Arg179, His186, 200–203 (FGEY), Arg213, and Tyr292 contribute to the substrate site.

This sequence belongs to the NAD(P)-dependent epimerase/dehydratase family. HldD subfamily. As to quaternary structure, homopentamer. The cofactor is NADP(+).

It catalyses the reaction ADP-D-glycero-beta-D-manno-heptose = ADP-L-glycero-beta-D-manno-heptose. Its pathway is nucleotide-sugar biosynthesis; ADP-L-glycero-beta-D-manno-heptose biosynthesis; ADP-L-glycero-beta-D-manno-heptose from D-glycero-beta-D-manno-heptose 7-phosphate: step 4/4. Catalyzes the interconversion between ADP-D-glycero-beta-D-manno-heptose and ADP-L-glycero-beta-D-manno-heptose via an epimerization at carbon 6 of the heptose. In Paraburkholderia xenovorans (strain LB400), this protein is ADP-L-glycero-D-manno-heptose-6-epimerase.